The primary structure comprises 297 residues: Large ribosomal subunit protein uL18 (297 aa).

Gly-2 is subject to N-acetylglycine. Lys-5 and Lys-48 each carry N6-acetyllysine. Ser-185 carries the post-translational modification Phosphoserine. N6-acetyllysine; alternate is present on Lys-220. Lys-220 participates in a covalent cross-link: Glycyl lysine isopeptide (Lys-Gly) (interchain with G-Cter in SUMO1); alternate. Lys-220 is covalently cross-linked (Glycyl lysine isopeptide (Lys-Gly) (interchain with G-Cter in SUMO2); alternate). Thr-232 carries the post-translational modification Phosphothreonine. Residues 253-297 (YEKKPKKEVKKKRWNRPKMSLAQKKDRVAQKKASFLRAQERAAES) form a disordered region. Residues 258-268 (KKEVKKKRWNR) are compositionally biased toward basic residues. Ser-272 is modified (phosphoserine).

Belongs to the universal ribosomal protein uL18 family. In terms of assembly, component of the large ribosomal subunit (LSU). Part of the 5S RNP complex, which is a LSU subcomplex composed of the 5S RNA, RPL5 and RPL11. Component of a hexameric 5S RNP precursor complex, composed of 5S RNA, RRS1, RPF2/BXDC1, RPL5, RPL11 and HEATR3; this complex acts as a precursor for ribosome assembly. Interacts with isoform 1 of NVL in an ATP-dependent manner. Interacts with RRP1B. Interacts with IPO5, IPO7 and KPNB1; these interactions may be involved in RPL5 nuclear import for the assembly of ribosomal subunits.

It is found in the cytoplasm. It localises to the nucleus. The protein localises to the nucleolus. Its function is as follows. Component of the ribosome, a large ribonucleoprotein complex responsible for the synthesis of proteins in the cell. The small ribosomal subunit (SSU) binds messenger RNAs (mRNAs) and translates the encoded message by selecting cognate aminoacyl-transfer RNA (tRNA) molecules. The large subunit (LSU) contains the ribosomal catalytic site termed the peptidyl transferase center (PTC), which catalyzes the formation of peptide bonds, thereby polymerizing the amino acids delivered by tRNAs into a polypeptide chain. The nascent polypeptides leave the ribosome through a tunnel in the LSU and interact with protein factors that function in enzymatic processing, targeting, and the membrane insertion of nascent chains at the exit of the ribosomal tunnel. As part of the 5S RNP/5S ribonucleoprotein particle it is an essential component of the LSU, required for its formation and the maturation of rRNAs. It also couples ribosome biogenesis to p53/TP53 activation. As part of the 5S RNP it accumulates in the nucleoplasm and inhibits MDM2, when ribosome biogenesis is perturbed, mediating the stabilization and the activation of TP53. The chain is Large ribosomal subunit protein uL18 (RPL5) from Homo sapiens (Human).